The sequence spans 330 residues: Trans-1,2-dihydrobenzene-1,2-diol dehydrogenase (330 aa).

The protein belongs to the Gfo/Idh/MocA family. In terms of assembly, homodimer.

The catalysed reaction is (1R,2R)-1,2-dihydrobenzene-1,2-diol + NADP(+) = catechol + NADPH + H(+). The enzyme catalyses D-xylose + NADP(+) = D-xylono-1,5-lactone + NADPH + H(+). This chain is Trans-1,2-dihydrobenzene-1,2-diol dehydrogenase (dhdh), found in Xenopus tropicalis (Western clawed frog).